Consider the following 315-residue polypeptide: Methionyl-tRNA formyltransferase (315 aa).

(6S)-5,6,7,8-tetrahydrofolate is bound at residue 113 to 116 (SILP).

Belongs to the Fmt family.

It carries out the reaction L-methionyl-tRNA(fMet) + (6R)-10-formyltetrahydrofolate = N-formyl-L-methionyl-tRNA(fMet) + (6S)-5,6,7,8-tetrahydrofolate + H(+). In terms of biological role, attaches a formyl group to the free amino group of methionyl-tRNA(fMet). The formyl group appears to play a dual role in the initiator identity of N-formylmethionyl-tRNA by promoting its recognition by IF2 and preventing the misappropriation of this tRNA by the elongation apparatus. The chain is Methionyl-tRNA formyltransferase from Vibrio vulnificus (strain YJ016).